The chain runs to 269 residues: Hydroxyethylthiazole kinase (269 aa).

M42 contributes to the substrate binding site. ATP contacts are provided by R118 and S164. G191 is a binding site for substrate.

It belongs to the Thz kinase family. Mg(2+) is required as a cofactor.

It catalyses the reaction 5-(2-hydroxyethyl)-4-methylthiazole + ATP = 4-methyl-5-(2-phosphooxyethyl)-thiazole + ADP + H(+). Its pathway is cofactor biosynthesis; thiamine diphosphate biosynthesis; 4-methyl-5-(2-phosphoethyl)-thiazole from 5-(2-hydroxyethyl)-4-methylthiazole: step 1/1. Functionally, catalyzes the phosphorylation of the hydroxyl group of 4-methyl-5-beta-hydroxyethylthiazole (THZ). The chain is Hydroxyethylthiazole kinase from Listeria monocytogenes serotype 4a (strain HCC23).